The chain runs to 1250 residues: Probable autotransporter YfaL (1250 aa).

A signal peptide spans 1–28; sequence MRIIFLRKEYLSLLPSMIASLFSANGVA. A disordered region spans residues 914 to 951; that stretch reads RSQEVTPPSPPDPDPTPDPDPTPDPDPTPDPEPTPAYQ. The stretch at 919–920 is repeat 1; it reads TP. The segment at 919–948 is 15 X 2 AA approximate tandem repeats of [DTPE]-P; that stretch reads TPPSPPDPDPTPDPDPTPDPDPTPDPEPTP. The stretch at 921-922 is one 2; approximate repeat; it reads PS. Residues 923–924 form repeat 3; it reads PP. A 4; approximate repeat occupies 925–926; sequence DP. 11 repeat units span residues 927 to 928, 929 to 930, 931 to 932, 933 to 934, 935 to 936, 937 to 938, 939 to 940, 941 to 942, 943 to 944, 945 to 946, and 947 to 948. A compositionally biased stretch (acidic residues) spans 928-942; the sequence is PTPDPDPTPDPDPTP. The Autotransporter domain occupies 980 to 1250; the sequence is AGGDGQTLNL…AGFLSMTVKW (271 aa).

Post-translationally, an approximately 170 kDa protein is detected in the outer membrane, while a C-terminal 55 kDa fragment is detected in whole cells. The full-length putative autotransporter may be cleaved to release the mature protein from the outer membrane; Pefabloc SC, a Ser-Thr protease inhibitor prevents the appearance of the 55 kDa C--terminal fragment.

Its subcellular location is the periplasm. It localises to the secreted. The protein localises to the cell surface. It is found in the cell outer membrane. Functionally, probably an autotransporter. Upon overexpression shows increased adherence to polyvinyl chloride (PVC) plates, increased mature biofilm formation. This is Probable autotransporter YfaL (yfaL) from Escherichia coli (strain K12).